Here is a 313-residue protein sequence, read N- to C-terminus: Porphobilinogen deaminase (313 aa).

S-(dipyrrolylmethanemethyl)cysteine is present on C242.

The protein belongs to the HMBS family. In terms of assembly, monomer. Dipyrromethane serves as cofactor.

It carries out the reaction 4 porphobilinogen + H2O = hydroxymethylbilane + 4 NH4(+). It functions in the pathway porphyrin-containing compound metabolism; protoporphyrin-IX biosynthesis; coproporphyrinogen-III from 5-aminolevulinate: step 2/4. Its function is as follows. Tetrapolymerization of the monopyrrole PBG into the hydroxymethylbilane pre-uroporphyrinogen in several discrete steps. This is Porphobilinogen deaminase from Pseudomonas putida (strain W619).